A 241-amino-acid chain; its full sequence is tRNA (guanine-N(1)-)-methyltransferase (241 aa).

S-adenosyl-L-methionine-binding positions include G112 and 131–136 (LGDFVL).

It belongs to the RNA methyltransferase TrmD family. In terms of assembly, homodimer.

It localises to the cytoplasm. It catalyses the reaction guanosine(37) in tRNA + S-adenosyl-L-methionine = N(1)-methylguanosine(37) in tRNA + S-adenosyl-L-homocysteine + H(+). In terms of biological role, specifically methylates guanosine-37 in various tRNAs. This is tRNA (guanine-N(1)-)-methyltransferase from Clostridium novyi (strain NT).